The sequence spans 103 residues: Cell division protein FtsB (103 aa).

The Cytoplasmic portion of the chain corresponds to 1–3 (MGK). Residues 4 to 21 (LTLLLLAILVWLQYSLWF) traverse the membrane as a helical segment. Topologically, residues 22–103 (GKNGIHDYTR…RAQSAGQNNR (82 aa)) are periplasmic. The stretch at 31–71 (RVNNDVAAQQATNAKLKARNDQLFAEIDDLNGGQEALEERA) forms a coiled coil.

It belongs to the FtsB family. Part of a complex composed of FtsB, FtsL and FtsQ.

The protein resides in the cell inner membrane. In terms of biological role, essential cell division protein. May link together the upstream cell division proteins, which are predominantly cytoplasmic, with the downstream cell division proteins, which are predominantly periplasmic. This Escherichia coli O81 (strain ED1a) protein is Cell division protein FtsB.